The sequence spans 156 residues: Small ribosomal subunit protein uS7 (156 aa).

The protein belongs to the universal ribosomal protein uS7 family. In terms of assembly, part of the 30S ribosomal subunit. Contacts proteins S9 and S11.

One of the primary rRNA binding proteins, it binds directly to 16S rRNA where it nucleates assembly of the head domain of the 30S subunit. Is located at the subunit interface close to the decoding center, probably blocks exit of the E-site tRNA. The polypeptide is Small ribosomal subunit protein uS7 (Cutibacterium acnes (strain DSM 16379 / KPA171202) (Propionibacterium acnes)).